Reading from the N-terminus, the 677-residue chain is MTQVAKKILVTCALPYANGSIHLGHMLEHIQADVWVRYQRMRGHEVNFICADDAHGTPIMLKAQQLGITPEQMIGEMSQEHQTDFAGFNISYDNYHSTHSEENRQLSELIYSRLKENGFIKNRTISQLYDPEKGMFLPDRFVKGTCPKCKSPDQYGDNCEVCGATYSPTELIEPKSVVSGATPVMRDSEHFFFDLPSFSEMLQAWTRSGALQEQVANKMQEWFESGLQQWDISRDAPYFGFEIPNAPGKYFYVWLDAPIGYMGSFKNLCDKRGDSVSFDEYWKKDSTAELYHFIGKDIVYFHSLFWPAMLEGSNFRKPTNLFVHGYVTVNGAKMSKSRGTFIKASTWLNHFDADSLRYYYTAKLSSRIDDIDLNLEDFVQRVNADIVNKVVNLASRNAGFINKRFDGVLASELADPQLYRTFTDAAEVIGEAWESREFGKAVREIMALADLANRYVDEQAPWVVAKQEGRDADLQAICSMGINLFRVLMTYLKPVLPKLTERAEAFLNTELTWDGIQQPLLDHKVNPFKALYNRIDMKQVEALVEASKEEVKAAAAPVTGPLADDPIQETITFDDFAKVDLRVALIENAEFVEGSDKLLRLTLDLGGEKRNVFSGIRSAYPDPQALIGRHTIMVANLAPRKMRFGISEGMVMAAGPGGKDIFLLSPDAGAKPGHQVK.

The 'HIGH' region signature appears at P15 to H25. The Zn(2+) site is built by C146, C149, C159, and C162. The short motif at K333–S337 is the 'KMSKS' region element. K336 lines the ATP pocket. In terms of domain architecture, tRNA-binding spans D575–K677.

The protein belongs to the class-I aminoacyl-tRNA synthetase family. MetG type 1 subfamily. In terms of assembly, homodimer. Requires Zn(2+) as cofactor.

It is found in the cytoplasm. It carries out the reaction tRNA(Met) + L-methionine + ATP = L-methionyl-tRNA(Met) + AMP + diphosphate. Is required not only for elongation of protein synthesis but also for the initiation of all mRNA translation through initiator tRNA(fMet) aminoacylation. The protein is Methionine--tRNA ligase of Shigella boydii serotype 18 (strain CDC 3083-94 / BS512).